A 1177-amino-acid polypeptide reads, in one-letter code: Putative ATP-dependent RNA helicase TDRD12 (1177 aa).

One can recognise a Tudor 1 domain in the interval Thr56–Leu118. A Helicase ATP-binding domain is found at Trp447 to Val635. Residue Ser460–Leu467 participates in ATP binding. The short motif at Asp574 to Glu577 is the DEAH box element. Residues Ile900–Phe999 form the Tudor 2 domain. Residues Glu1098–Arg1177 are disordered. The segment covering Ser1100–Gln1115 has biased composition (polar residues).

As to quaternary structure, component of a mRNP complex containing PIWIL2, TDRD1 and piRNAs. Component of the PET complex, at least composed of EXD1, PIWIL2, TDRD12 and piRNAs.

It catalyses the reaction ATP + H2O = ADP + phosphate + H(+). Functionally, probable ATP-binding RNA helicase required during spermatogenesis to repress transposable elements and preventing their mobilization, which is essential for the germline integrity. Acts via the piRNA metabolic process, which mediates the repression of transposable elements during meiosis by forming complexes composed of piRNAs and Piwi proteins and governs the methylation and subsequent repression of transposons. Involved in the secondary piRNAs metabolic process. Acts via the PET complex, a multiprotein complex required during the secondary piRNAs metabolic process for the PIWIL2 slicing-triggered loading of PIWIL4 piRNAs. The protein is Putative ATP-dependent RNA helicase TDRD12 (TDRD12) of Homo sapiens (Human).